A 238-amino-acid chain; its full sequence is Riboflavin synthase (238 aa).

Lumazine-binding repeat units lie at residues 1-103 (MFTG…FGGH) and 104-205 (YVQG…EKQI). 2,4-dihydroxypteridine-binding positions include 4–6 (GIV), 54–56 (CLT), and 68–73 (GISPET). A Phosphoserine modification is found at serine 95. 2,4-dihydroxypteridine contacts are provided by residues 107 to 109 (GHV), lysine 143, 152 to 154 (SLT), and 170 to 175 (SMIKHT).

Homotrimer.

It carries out the reaction 2 6,7-dimethyl-8-(1-D-ribityl)lumazine + H(+) = 5-amino-6-(D-ribitylamino)uracil + riboflavin. Its pathway is cofactor biosynthesis; riboflavin biosynthesis; riboflavin from 2-hydroxy-3-oxobutyl phosphate and 5-amino-6-(D-ribitylamino)uracil: step 2/2. Its function is as follows. Catalyzes the dismutation of two molecules of 6,7-dimethyl-8-ribityllumazine, resulting in the formation of riboflavin and 5-amino-6-(D-ribitylamino)uracil. This is Riboflavin synthase from Saccharomyces cerevisiae (strain ATCC 204508 / S288c) (Baker's yeast).